Consider the following 1146-residue polypeptide: Integrin alpha-PS1 (1146 aa).

The first 30 residues, 1–30, serve as a signal peptide directing secretion; it reads MLELPFTTIRPNCRLRQNLGILIILQCVLT. Topologically, residues 31–1085 are extracellular; that stretch reads CYNFNLEQRL…NQQRDTSIPW (1055 aa). FG-GAP repeat units follow at residues 38–105, 121–186, 193–245, 254–303, 304–366, 367–422, and 432–494; these read QRLP…FDDC, LSPP…FEEV, RPVQ…YLQR, HSDL…KSTD, NPIP…TLPM, KYTL…GLNS, and ELGG…RKEL. Asn68, Asn86, and Asn147 each carry an N-linked (GlcNAc...) asparagine glycan. Asn470, Asn511, Asn657, Asn680, Asn711, Asn718, Asn761, and Asn928 each carry an N-linked (GlcNAc...) asparagine glycan. The tract at residues 938–958 is disordered; sequence YYSSSHRDDHSDDTQSNRNRV. Basic and acidic residues predominate over residues 942–952; sequence SHRDDHSDDTQ. A glycan (N-linked (GlcNAc...) asparagine) is linked at Asn1027. A helical membrane pass occupies residues 1086–1106; the sequence is LIIILGIVGGLLLLALVTYVL. At 1107-1146 the chain is on the cytoplasmic side; sequence WKVGFFKRIRPTDPTLSGNLEKMNEEKPFLAPSKNTHHVF.

The protein belongs to the integrin alpha chain family. As to quaternary structure, heterodimer of an alpha and a beta subunit. The alpha subunit is composed of a heavy and a light chain linked by a disulfide bond. Alpha-PS1 associates with beta-PS. As to expression, expressed in follicle cells (at protein level). At syncytial blastoderm stage, expressed in the ectoderm but not in the mesodermal precursors. At embryonic stage 7, expressed in dorsal and ventrolateral ectoderm and in some yolk nuclei. At late stage 10, expression is homogeneous in the ectoderm and is particularly abundant in the anterior and posterior midgut primordia. At stage 11, strongly expressed in a metameric pattern in the ectoderm, in the proctodeum and in the posterior midgut primordium. At stage 12, accumulates at the segment boundaries that start to become morphologically visible, similar expression pattern is observed in the central nervous system. In third larval instar wing imaginal disk, strongly expressed in the dorsal compartment, in the adepithelial cells and in patches on the peripodial membrane covering the imaginal disk to the outside.

It is found in the apical cell membrane. It localises to the lateral cell membrane. Its subcellular location is the basal cell membrane. Functionally, integrin alpha-PS1/beta-PS is a receptor for laminin. The polypeptide is Integrin alpha-PS1 (mew) (Drosophila melanogaster (Fruit fly)).